A 376-amino-acid polypeptide reads, in one-letter code: Erythronate-4-phosphate dehydrogenase (376 aa).

2 residues coordinate substrate: Ser45 and Thr67. Asp147 provides a ligand contact to NAD(+). Arg209 is a catalytic residue. Residue Asp233 coordinates NAD(+). Glu238 is an active-site residue. His255 acts as the Proton donor in catalysis. Gly258 is an NAD(+) binding site. Residue Tyr259 participates in substrate binding.

It belongs to the D-isomer specific 2-hydroxyacid dehydrogenase family. PdxB subfamily. As to quaternary structure, homodimer.

Its subcellular location is the cytoplasm. It carries out the reaction 4-phospho-D-erythronate + NAD(+) = (R)-3-hydroxy-2-oxo-4-phosphooxybutanoate + NADH + H(+). It functions in the pathway cofactor biosynthesis; pyridoxine 5'-phosphate biosynthesis; pyridoxine 5'-phosphate from D-erythrose 4-phosphate: step 2/5. Its function is as follows. Catalyzes the oxidation of erythronate-4-phosphate to 3-hydroxy-2-oxo-4-phosphonooxybutanoate. The chain is Erythronate-4-phosphate dehydrogenase from Shewanella baltica (strain OS195).